Consider the following 286-residue polypeptide: MKNILSIQSHVVFGHAGNSAAEFPMRRMGANVWPLNTVQFSNHTQYGHWTGCVMPASHLTEVVQGIANIDKLKTCNAVLSGYIGSAEQGEHILGIVRQVKAANPDALYFCDPVMGTPEKGCIVAPGVSDFHCQQSLLAADIVAPNLPELELLGGRTVHNVAEAVETARALCEKGPKIVLVKHLSRAASREDSFEMLLVTPTDAWHISRPLVEFERQPVGVGDLTSGLLLVNLLKGVALDKALEHTTAAVYEVMLVTKEMNEYELQLVAAQDGIANPRHHFQAVRLS.

Residues S9 and 44–45 each bind substrate; that span reads TQ. ATP contacts are provided by residues D111, A143, E148, K181, and 208 to 211; that span reads RPLV. Residue D222 coordinates substrate.

This sequence belongs to the pyridoxine kinase family. PdxY subfamily. Homodimer. Mg(2+) is required as a cofactor.

It carries out the reaction pyridoxal + ATP = pyridoxal 5'-phosphate + ADP + H(+). The protein operates within cofactor metabolism; pyridoxal 5'-phosphate salvage; pyridoxal 5'-phosphate from pyridoxal: step 1/1. Functionally, pyridoxal kinase involved in the salvage pathway of pyridoxal 5'-phosphate (PLP). Catalyzes the phosphorylation of pyridoxal to PLP. The polypeptide is Pyridoxal kinase PdxY (Pectobacterium atrosepticum (strain SCRI 1043 / ATCC BAA-672) (Erwinia carotovora subsp. atroseptica)).